A 762-amino-acid chain; its full sequence is Phosphoribosylformylglycinamidine synthase subunit PurL (762 aa).

Residue H58 is part of the active site. Y61 and K105 together coordinate ATP. E107 provides a ligand contact to Mg(2+). Substrate is bound by residues 108–111 (SHNH) and R130. Residue H109 is the Proton acceptor of the active site. D131 lines the Mg(2+) pocket. Q260 lines the substrate pocket. Position 288 (D288) interacts with Mg(2+). 332 to 334 (ESQ) contributes to the substrate binding site. Positions 520 and 557 each coordinate ATP. A Mg(2+)-binding site is contributed by N558. Residue S560 coordinates substrate.

The protein belongs to the FGAMS family. Monomer. Part of the FGAM synthase complex composed of 1 PurL, 1 PurQ and 2 PurS subunits.

It localises to the cytoplasm. It carries out the reaction N(2)-formyl-N(1)-(5-phospho-beta-D-ribosyl)glycinamide + L-glutamine + ATP + H2O = 2-formamido-N(1)-(5-O-phospho-beta-D-ribosyl)acetamidine + L-glutamate + ADP + phosphate + H(+). It functions in the pathway purine metabolism; IMP biosynthesis via de novo pathway; 5-amino-1-(5-phospho-D-ribosyl)imidazole from N(2)-formyl-N(1)-(5-phospho-D-ribosyl)glycinamide: step 1/2. Part of the phosphoribosylformylglycinamidine synthase complex involved in the purines biosynthetic pathway. Catalyzes the ATP-dependent conversion of formylglycinamide ribonucleotide (FGAR) and glutamine to yield formylglycinamidine ribonucleotide (FGAM) and glutamate. The FGAM synthase complex is composed of three subunits. PurQ produces an ammonia molecule by converting glutamine to glutamate. PurL transfers the ammonia molecule to FGAR to form FGAM in an ATP-dependent manner. PurS interacts with PurQ and PurL and is thought to assist in the transfer of the ammonia molecule from PurQ to PurL. This chain is Phosphoribosylformylglycinamidine synthase subunit PurL, found in Rhodococcus erythropolis (strain PR4 / NBRC 100887).